We begin with the raw amino-acid sequence, 567 residues long: Beta-galactoside-specific lectin 2 (567 aa).

An N-terminal signal peptide occupies residues 1 to 33; it reads MNARLASSRAWVWCFLMVGLVCGATAKAESKIN. Residue Asn145 is glycosylated (N-linked (GlcNAc...) asparagine). Residue Glu198 is part of the active site. Disulfide bonds link Cys280–Cys306 and Cys322–Cys341. A propeptide spans 288 to 301 (connecting peptide); it reads DVHNWPLVIRPVMV. The Ricin B-type lectin 1 domain occupies 309–439; sequence SEPTVRIVGR…DSLGQSWLAS (131 aa). Position 324–326 (324–326) interacts with D-galactose; that stretch reads DVR. N-linked (GlcNAc...) asparagine glycosylation is present at Asn362. The cysteines at positions 365 and 382 are disulfide-linked. A glycan (N-linked (GlcNAc...) asparagine) is linked at Asn440. The region spanning 443-566 is the Ricin B-type lectin 2 domain; sequence APREVTIYGF…GNPNQMWLPV (124 aa). Cystine bridges form between Cys456-Cys469 and Cys495-Cys512. 539–541 is a D-galactose binding site; sequence DVR.

Belongs to the ribosome-inactivating protein family. Type 2 RIP subfamily. In terms of assembly, disulfide-linked dimer of A and B chains.

It catalyses the reaction Endohydrolysis of the N-glycosidic bond at one specific adenosine on the 28S rRNA.. Its function is as follows. The A chain is responsible for inhibiting protein synthesis through the catalytic inactivation of 60S ribosomal subunits by removing adenine from position 4,324 of 28S rRNA. The B chain binds to cell receptors and probably facilitates the entry into the cell of the A chain; B chains are also responsible for cell agglutination (lectin activity). This Viscum album (European mistletoe) protein is Beta-galactoside-specific lectin 2.